A 493-amino-acid chain; its full sequence is Ribosomal protein uS12 methylthiotransferase RimO (493 aa).

The MTTase N-terminal domain occupies 5–121; it reads RTVALVTLGC…ISDRLQTILN (117 aa). [4Fe-4S] cluster contacts are provided by cysteine 14, cysteine 50, cysteine 84, cysteine 198, cysteine 202, and cysteine 205. The 232-residue stretch at 184-415 folds into the Radical SAM core domain; the sequence is LGTSPVASVK…QLAEELTSQR (232 aa). Residues 417 to 487 form the TRAM domain; sequence EERVGETLQV…GVDLVAEHHE (71 aa).

The protein belongs to the methylthiotransferase family. RimO subfamily. [4Fe-4S] cluster is required as a cofactor.

It is found in the cytoplasm. It catalyses the reaction L-aspartate(89)-[ribosomal protein uS12]-hydrogen + (sulfur carrier)-SH + AH2 + 2 S-adenosyl-L-methionine = 3-methylsulfanyl-L-aspartate(89)-[ribosomal protein uS12]-hydrogen + (sulfur carrier)-H + 5'-deoxyadenosine + L-methionine + A + S-adenosyl-L-homocysteine + 2 H(+). Functionally, catalyzes the methylthiolation of an aspartic acid residue of ribosomal protein uS12. In Streptomyces griseus subsp. griseus (strain JCM 4626 / CBS 651.72 / NBRC 13350 / KCC S-0626 / ISP 5235), this protein is Ribosomal protein uS12 methylthiotransferase RimO.